The following is a 402-amino-acid chain: 4-hydroxy-3-methylbut-2-en-1-yl diphosphate synthase (ferredoxin) (402 aa).

The [4Fe-4S] cluster site is built by Cys311, Cys314, Cys345, and Glu352.

This sequence belongs to the IspG family. [4Fe-4S] cluster serves as cofactor.

The enzyme catalyses (2E)-4-hydroxy-3-methylbut-2-enyl diphosphate + 2 oxidized [2Fe-2S]-[ferredoxin] + H2O = 2-C-methyl-D-erythritol 2,4-cyclic diphosphate + 2 reduced [2Fe-2S]-[ferredoxin] + H(+). Its pathway is isoprenoid biosynthesis; isopentenyl diphosphate biosynthesis via DXP pathway; isopentenyl diphosphate from 1-deoxy-D-xylulose 5-phosphate: step 5/6. In terms of biological role, converts 2C-methyl-D-erythritol 2,4-cyclodiphosphate (ME-2,4cPP) into 1-hydroxy-2-methyl-2-(E)-butenyl 4-diphosphate, using ferredoxin I (PetF) as the reducing agent. The polypeptide is 4-hydroxy-3-methylbut-2-en-1-yl diphosphate synthase (ferredoxin) (Thermosynechococcus vestitus (strain NIES-2133 / IAM M-273 / BP-1)).